Reading from the N-terminus, the 1465-residue chain is Neuropathy target esterase sws (1465 aa).

Topologically, residues 1-34 (MDVLEMLRASASGSYNTIFSEAWCQYVSKQITAT) are lumenal. A helical membrane pass occupies residues 35–55 (MYMYCALGMMGVLFLAWFMYF). The Cytoplasmic segment spans residues 56–1465 (KRMARLRLRD…RSSANNETKN (1410 aa)). 174–301 (IFGHFEKPVF…IRVIQVIMIR (128 aa)) is a binding site for a nucleoside 3',5'-cyclic phosphate. 2 stretches are compositionally biased toward polar residues: residues 331–349 (STMS…RQTP) and 434–454 (QQSV…TPDG). Disordered stretches follow at residues 331–421 (STMS…TEVH) and 434–460 (QQSV…SCPP). 2 positions are modified to phosphoserine: S446 and S455. A nucleoside 3',5'-cyclic phosphate-binding positions include 484-611 (ELGL…VVRR) and 600-727 (IVLD…LSHR). One can recognise a PNPLA domain in the interval 954–1120 (LVLGGGGARG…VNNLPGHLWR (167 aa)). The short motif at 958–963 (GGGARG) is the GXGXXG element. A GXSXG motif is present at residues 985–989 (GVSIG). S987 (nucleophile) is an active-site residue. D1107 functions as the Proton acceptor in the catalytic mechanism. Residues 1107 to 1109 (DGG) carry the DGA/G motif. S1201 carries the post-translational modification Phosphoserine. Positions 1371–1465 (LERKTDKSTQ…RSSANNETKN (95 aa)) are disordered. A compositionally biased stretch (low complexity) spans 1378 to 1390 (STQSSPPTSSRTS). A compositionally biased stretch (basic and acidic residues) spans 1392 to 1402 (RGKEEARHMDN). A compositionally biased stretch (polar residues) spans 1413–1424 (TGSGATEGIHTS). Basic and acidic residues predominate over residues 1447–1456 (VYKDEDKENR).

Belongs to the NTE family. Interacts with Pka-C3; interaction inhibits the catalytic function of Pka-C3 and the esterase activity of sws.

It localises to the endoplasmic reticulum membrane. It catalyses the reaction a 1-acyl-sn-glycero-3-phosphocholine + H2O = sn-glycerol 3-phosphocholine + a fatty acid + H(+). Its function is as follows. Phospholipase B that deacylates intracellular phosphatidylcholine (PtdCho), generating glycerophosphocholine (GroPtdCho). This deacylation occurs at both sn-2 and sn-1 positions of PtdCho. Its specific chemical modification by certain organophosphorus (OP) compounds leads to distal axonopathy. Plays a role in the signaling mechanism between neurons and glia that regulates glia wrapping during development of the adult brain. Essential for membrane lipid homeostasis and cell survival in both neurons and glia of the adult brain. The protein is Neuropathy target esterase sws of Drosophila erecta (Fruit fly).